The chain runs to 399 residues: 1-deoxy-D-xylulose 5-phosphate reductoisomerase (399 aa).

Residues Thr13, Gly14, Ser15, Ile16, and Asn127 each contribute to the NADPH site. A 1-deoxy-D-xylulose 5-phosphate-binding site is contributed by Lys128. Glu129 provides a ligand contact to NADPH. Asp153 is a Mn(2+) binding site. 1-deoxy-D-xylulose 5-phosphate-binding residues include Ser154, Glu155, Ser187, and His210. Glu155 is a Mn(2+) binding site. NADPH is bound at residue Gly216. Residues Ser223, Asn228, Lys229, and Glu232 each contribute to the 1-deoxy-D-xylulose 5-phosphate site. Mn(2+) is bound at residue Glu232.

Belongs to the DXR family. Mg(2+) serves as cofactor. The cofactor is Mn(2+).

The enzyme catalyses 2-C-methyl-D-erythritol 4-phosphate + NADP(+) = 1-deoxy-D-xylulose 5-phosphate + NADPH + H(+). Its pathway is isoprenoid biosynthesis; isopentenyl diphosphate biosynthesis via DXP pathway; isopentenyl diphosphate from 1-deoxy-D-xylulose 5-phosphate: step 1/6. Its function is as follows. Catalyzes the NADPH-dependent rearrangement and reduction of 1-deoxy-D-xylulose-5-phosphate (DXP) to 2-C-methyl-D-erythritol 4-phosphate (MEP). This chain is 1-deoxy-D-xylulose 5-phosphate reductoisomerase, found in Bordetella pertussis (strain Tohama I / ATCC BAA-589 / NCTC 13251).